We begin with the raw amino-acid sequence, 319 residues long: Olfactory receptor 8K1 (319 aa).

Residues 1 to 31 (MNHVVKHNHTAVTKVTEFILMGITDNPGLQA) lie on the Extracellular side of the membrane. The N-linked (GlcNAc...) asparagine glycan is linked to Asn-8. The chain crosses the membrane as a helical span at residues 32–52 (PLFGLFLIIYLVTVIGNLGMV). The Cytoplasmic portion of the chain corresponds to 53–60 (ILTYLDSK). Residues 61 to 81 (LHTPMYFFLRHLSITDLGYST) traverse the membrane as a helical segment. Topologically, residues 82–105 (VIAPKMLVNFIVHKNTISYNWYAT) are extracellular. The helical transmembrane segment at 106 to 126 (QLAFFEIFIISELFILSAMAY) threads the bilayer. Residues 127–145 (DRYVAICKPLLYVIIMAEK) are Cytoplasmic-facing. The chain crosses the membrane as a helical span at residues 146–166 (VLWVLVIVPYLYSTFVSLFLT). Over 167-203 (IKLFKLSFCGSNIISYFYCDCIPLMSILCSDTNELEL) the chain is Extracellular. A helical membrane pass occupies residues 204–223 (IILIFSGCNLLFSLSIVLIS). Residues 224-243 (YMFILVAILRMNSRKGRYKA) lie on the Cytoplasmic side of the membrane. Residues 244–264 (FSTCSSHLTVVIMFYGTLLFI) form a helical membrane-spanning segment. Residues 265–277 (YLQPKSSHTLAID) are Extracellular-facing. Residues 278–298 (KMASVFYTLLIPMLNPLIYSL) form a helical membrane-spanning segment. Residues 299–319 (RNKEVKDALKRTLTNRFKIPI) lie on the Cytoplasmic side of the membrane.

This sequence belongs to the G-protein coupled receptor 1 family.

The protein localises to the cell membrane. Its function is as follows. Odorant receptor. The polypeptide is Olfactory receptor 8K1 (OR8K1) (Homo sapiens (Human)).